The following is a 305-amino-acid chain: MELIFLGTSAGVPTRTRNVTAILLNLQHPTQSGLWLFDCGEGTQHQLLHTAFNPGKLDKIFISHLHGDHLFGLPGLLCSRSMSGIIQPLTIYGPHGIREFVETALRISGSWTDYPLEIVEIGAGEIFDDGLRKVTAYPMEHPLECYGYRIEEHDKPGALNAQALKAAGVPPGPLFQELKAGKTIMLDDGRQINGADYLAAPVPGKALAIFGDTGPCDAALELAKGVDVMVHEATLDMAMEAKANSRGHSSTRQAAALAREAGVGKLIITHVSSRYDDKGCQHLLRECRSIFPATELANDFAVFNV.

Positions 64, 66, 68, 69, 141, 212, and 270 each coordinate Zn(2+). Asp68 acts as the Proton acceptor in catalysis.

This sequence belongs to the RNase Z family. RNase BN subfamily. Homodimer. It depends on Zn(2+) as a cofactor.

Functionally, zinc phosphodiesterase, which has both exoribonuclease and endoribonuclease activities. The chain is Ribonuclease BN from Escherichia coli O127:H6 (strain E2348/69 / EPEC).